A 311-amino-acid chain; its full sequence is Catechol 1,2-dioxygenase 1 (311 aa).

Residues Tyr164, Tyr200, His224, and His226 each contribute to the Fe cation site.

Belongs to the intradiol ring-cleavage dioxygenase family. Homodimer. The cofactor is Fe(3+).

It catalyses the reaction catechol + O2 = cis,cis-muconate + 2 H(+). It functions in the pathway aromatic compound metabolism; beta-ketoadipate pathway; 5-oxo-4,5-dihydro-2-furylacetate from catechol: step 1/3. Can cleave 4-methyl-, 4-chloro-, and 3-methoxycatechol at lower rates than catechol, but has no activity with 4-nitrocatechol or protocatechuic acid. The chain is Catechol 1,2-dioxygenase 1 (catA1) from Acinetobacter lwoffii.